A 101-amino-acid chain; its full sequence is Small ribosomal subunit protein bS18c (101 aa).

Over residues 1–19 (MNKSKRPFTKSKRSFRRRL) the composition is skewed to basic residues. The tract at residues 1–23 (MNKSKRPFTKSKRSFRRRLPPIQ) is disordered.

It belongs to the bacterial ribosomal protein bS18 family. In terms of assembly, part of the 30S ribosomal subunit.

The protein resides in the plastid. The protein localises to the chloroplast. This chain is Small ribosomal subunit protein bS18c, found in Draba nemorosa (Woodland whitlowgrass).